The chain runs to 225 residues: Uracil-DNA glycosylase (225 aa).

The Proton acceptor role is filled by Asp65.

Belongs to the uracil-DNA glycosylase (UDG) superfamily. UNG family.

The protein resides in the cytoplasm. It carries out the reaction Hydrolyzes single-stranded DNA or mismatched double-stranded DNA and polynucleotides, releasing free uracil.. Its function is as follows. Excises uracil residues from the DNA which can arise as a result of misincorporation of dUMP residues by DNA polymerase or due to deamination of cytosine. The sequence is that of Uracil-DNA glycosylase from Bacillus thuringiensis subsp. konkukian (strain 97-27).